Reading from the N-terminus, the 174-residue chain is Protein CURVATURE THYLAKOID 1B, chloroplastic (174 aa).

The disordered stretch occupies residues 1–20 (MASLSVSSSSTIIDSRAPPS). A chloroplast-targeting transit peptide spans 1-63 (MASLSVSSSS…RKIVRNVVTR (63 aa)). Ala64 carries the post-translational modification N-acetylalanine. At 64 to 100 (ATTEVGEAPATTTEAETTELPEIVKTAQEAWEKVDDK) the chain is on the stromal side. Residues 101-121 (YAIGSLAFAGVVALWGSAGMI) traverse the membrane as a helical segment. The Lumenal segment spans residues 122–126 (SAIDR). A helical transmembrane segment spans residues 127–147 (LPLVPGVLELVGIGYTGWFTY). The Stromal portion of the chain corresponds to 148–174 (KNLVFKPDREALFEKVKSTYKDILGSS).

The protein belongs to the CURT family. Homo- and heterodimers and trimers. Interacts with PSAL. In terms of processing, phosphorylated on either Thr-65 or Thr-66 by a threonine specific thylakoid kinase.

The protein resides in the plastid. It localises to the chloroplast thylakoid membrane. Its function is as follows. Determines thylakoid architecture by inducing membrane curvature. The polypeptide is Protein CURVATURE THYLAKOID 1B, chloroplastic (CURT1B) (Arabidopsis thaliana (Mouse-ear cress)).